Consider the following 192-residue polypeptide: 7-methyl-GTP pyrophosphatase (192 aa).

Aspartate 70 (proton acceptor) is an active-site residue.

It belongs to the Maf family. YceF subfamily. A divalent metal cation serves as cofactor.

Its subcellular location is the cytoplasm. It catalyses the reaction N(7)-methyl-GTP + H2O = N(7)-methyl-GMP + diphosphate + H(+). Functionally, nucleoside triphosphate pyrophosphatase that hydrolyzes 7-methyl-GTP (m(7)GTP). May have a dual role in cell division arrest and in preventing the incorporation of modified nucleotides into cellular nucleic acids. The sequence is that of 7-methyl-GTP pyrophosphatase from Xanthomonas campestris pv. campestris (strain 8004).